The following is a 318-amino-acid chain: Aldo-keto reductase family 1 member C21 (318 aa).

Gly-20–Ala-24 is a binding site for NADP(+). Lys-31 is a substrate binding site. Position 50 (Asp-50) interacts with NADP(+). Tyr-55 (proton donor) is an active-site residue. His-117 provides a ligand contact to substrate. NADP(+) contacts are provided by residues Ser-166–Asn-167, Gln-190, Tyr-216–Tyr-224, and Thr-270–Asn-280.

Belongs to the aldo/keto reductase family. In terms of assembly, monomer.

The protein resides in the cytoplasm. It catalyses the reaction androsterone + NADP(+) = 5alpha-androstan-3,17-dione + NADPH + H(+). The enzyme catalyses androsterone + NAD(+) = 5alpha-androstan-3,17-dione + NADH + H(+). Functionally, NADP-dependent 17-alpha-hydroxysteroid dehydrogenase that converts 5-alpha-androstane-3,17-dione into androsterone. Has lower 3-alpha-hydroxysteroid dehydrogenase activity. Has broad substrate specificity and acts on various 17-alpha-hydroxysteroids, 17-ketosteroids, 3-alpha hydroxysteroids and 3-ketosteroids. Reduction of keto groups is strictly stereoselective. Reduction of 17-ketosteroids yields only 17-alpha-hydroxysteroids. Likewise, reduction of 3-ketosteroids yields only 3-alpha-hydroxysteroids. This chain is Aldo-keto reductase family 1 member C21 (Akr1c21), found in Rattus norvegicus (Rat).